A 1014-amino-acid polypeptide reads, in one-letter code: Klotho (1014 aa).

Positions 1 to 34 (MPARAPPRRLPRLLLLRLLSLHLLLLTLRARCLS) are cleaved as a signal peptide. Over 35–983 (AEPGQGAQTW…GCGFFQTRKS (949 aa)) the chain is Extracellular. 2 glycosyl hydrolase-1 regions span residues 59–508 (LHDT…NNGF) and 517–955 (LEGT…NNGF). N161, N285, N346, N609, N614, and N696 each carry an N-linked (GlcNAc...) asparagine glycan. The helical transmembrane segment at 984 to 1004 (LLAFISFLVFAFVTSLALIYY) threads the bilayer. Residues 1005-1014 (YSKKGRRRYK) are Cytoplasmic-facing.

Belongs to the glycosyl hydrolase 1 family. Klotho subfamily. As to quaternary structure, homodimer. Interacts with FGF23 and FGFR1. N-glycosylated. Present in cortical renal tubules and the parathyroid (at protein level). Strongly expressed in kidney. Expressed at low levels in brain, lung, intestine and ovaries.

It localises to the cell membrane. The protein resides in the apical cell membrane. The protein localises to the secreted. It carries out the reaction a beta-D-glucuronoside + H2O = D-glucuronate + an alcohol. Functionally, may have weak glycosidase activity towards glucuronylated steroids. However, it lacks essential active site Glu residues at positions 241 and 874, suggesting it may be inactive as a glycosidase in vivo. May be involved in the regulation of calcium and phosphorus homeostasis by inhibiting the synthesis of active vitamin D. Essential factor for the specific interaction between FGF23 and FGFR1. The Klotho peptide generated by cleavage of the membrane-bound isoform may be an anti-aging circulating hormone which would extend life span by inhibiting insulin/IGF1 signaling. The protein is Klotho (Kl) of Rattus norvegicus (Rat).